The following is a 67-amino-acid chain: MPSKNCAKNLHACQWERDIALVFLGLMVLFNIGQVVYMNRARLYRLIRRGAEQIPADDEEPIIGIRD.

The Extracellular segment spans residues 1-18; sequence MPSKNCAKNLHACQWERD. Residues 19–39 form a helical membrane-spanning segment; that stretch reads IALVFLGLMVLFNIGQVVYMN. Topologically, residues 40-67 are cytoplasmic; the sequence is RARLYRLIRRGAEQIPADDEEPIIGIRD.

Ubiquitously present in most tissues tested. Expressed in the somatic cells of intestine, muscle, neurons, somatic gonad and embryos but not in the germline (at protein level).

It localises to the late endosome membrane. Functionally, plays a role in RNA-mediated gene silencing by mediating transport of both ingested and endogenous dsRNA between cells. Not required for the uptake of dsRNA from the intestinal lumen. This Caenorhabditis elegans protein is Systemic RNA interference defective protein 5.